Here is a 360-residue protein sequence, read N- to C-terminus: Inward rectifier potassium channel 13 (360 aa).

The Cytoplasmic portion of the chain corresponds to 1-50 (MDSSNCKVNAPLLSQRHRRMVTKDGHSTLQMDGAQRGLVYLRDAWGILMD). The helical transmembrane segment at 51–77 (MRWRWMMLVFSASFVVHWLVFAVLWYA) threads the bilayer. Residues 78–105 (VAEMNGDLEIDHDVPPENHTICVKHITS) lie on the Extracellular side of the membrane. Positions 106–122 (FTAAFSFSLETQLTIGY) form an intramembrane region, helical; Pore-forming. The Selectivity filter motif lies at 119–124 (TIGYGT). Residues 123–131 (GTMFPSGDC) lie on the Extracellular side of the membrane. The chain crosses the membrane as a helical span at residues 132-157 (PSAIALLAIQMLLGLMLEAFITGAFV). Topologically, residues 158-360 (AKIARPKNRA…FQIAETGLTE (203 aa)) are cytoplasmic. A Phosphoserine; by PKA modification is found at serine 287.

The protein belongs to the inward rectifier-type potassium channel (TC 1.A.2.1) family. KCNJ13 subfamily. As to quaternary structure, homotetramer. Interacts with RAB28; the interaction may facilitate cone outer segments phagocytosis. In terms of processing, phosphorylation at Ser-287 by PKA increases ionic currents. Expressed in retina.

The protein resides in the membrane. It localises to the cell membrane. It catalyses the reaction K(+)(in) = K(+)(out). Inhibited by Ba(2+) and Cs(+), although sensitivity to those inhibitors is much lower than in other Kir channels. Functionally, inward rectifier potassium channels are characterized by a greater tendency to allow potassium to flow into the cell rather than out of it. Their voltage dependence is regulated by the concentration of extracellular potassium; as external potassium is raised, the voltage range of the channel opening shifts to more positive voltages. The inward rectification is mainly due to the blockage of outward current by internal magnesium. KCNJ13 has a very low single channel conductance, low sensitivity to block by external barium and cesium, and no dependence of its inward rectification properties on the internal blocking particle magnesium. The polypeptide is Inward rectifier potassium channel 13 (Mus musculus (Mouse)).